Reading from the N-terminus, the 328-residue chain is Malate dehydrogenase (328 aa).

12-18 (GAAGQIA) serves as a coordination point for NAD(+). Residues arginine 93 and arginine 99 each contribute to the substrate site. NAD(+) contacts are provided by residues asparagine 106, glutamine 113, and 130-132 (VGN). Asparagine 132 and arginine 163 together coordinate substrate. Histidine 188 functions as the Proton acceptor in the catalytic mechanism.

The protein belongs to the LDH/MDH superfamily. MDH type 2 family.

It catalyses the reaction (S)-malate + NAD(+) = oxaloacetate + NADH + H(+). Its function is as follows. Catalyzes the reversible oxidation of malate to oxaloacetate. This is Malate dehydrogenase from Burkholderia multivorans (strain ATCC 17616 / 249).